The primary structure comprises 214 residues: Octanoyltransferase (214 aa).

One can recognise a BPL/LPL catalytic domain in the interval 31–206 (KDDADEIWLL…QLAEQLGYNY (176 aa)). Residues 70–77 (RGGQVTYH), 137–139 (SLG), and 150–152 (GLA) each bind substrate. Cys-168 (acyl-thioester intermediate) is an active-site residue.

This sequence belongs to the LipB family.

The protein localises to the cytoplasm. It catalyses the reaction octanoyl-[ACP] + L-lysyl-[protein] = N(6)-octanoyl-L-lysyl-[protein] + holo-[ACP] + H(+). Its pathway is protein modification; protein lipoylation via endogenous pathway; protein N(6)-(lipoyl)lysine from octanoyl-[acyl-carrier-protein]: step 1/2. Catalyzes the transfer of endogenously produced octanoic acid from octanoyl-acyl-carrier-protein onto the lipoyl domains of lipoate-dependent enzymes. Lipoyl-ACP can also act as a substrate although octanoyl-ACP is likely to be the physiological substrate. This is Octanoyltransferase from Marinomonas sp. (strain MWYL1).